The sequence spans 80 residues: U-scoloptoxin(15)-Er1a (80 aa).

Residues 1–22 (MQNKGVVLTLFLVVSMAIVISS) form the signal peptide.

The protein belongs to the scoloptoxin-15 family. In terms of processing, contains 2 disulfide bonds. Expressed by the venom gland.

It is found in the secreted. In Ethmostigmus rubripes (Giant centipede), this protein is U-scoloptoxin(15)-Er1a.